A 688-amino-acid polypeptide reads, in one-letter code: Complement C1s-1 subcomponent (688 aa).

Positions 1 to 15 (MWYLVLFSLLASFSA) are cleaved as a signal peptide. In terms of domain architecture, CUB 1 spans 16–130 (EPTMHGEILS…TGFAAYYTAI (115 aa)). Ca(2+) is bound by residues Glu60, Asp68, Asp113, Asp131, Val132, and Glu134. Cys65 and Cys83 are joined by a disulfide. The region spanning 131 to 172 (DVNECTDFTDVPCSHFCNNFIGGYFCSCPPEYFLHDDMRNCG) is the EGF-like; calcium-binding domain. Intrachain disulfides connect Cys135/Cys147, Cys143/Cys156, and Cys158/Cys171. Positions 149, 150, and 153 each coordinate Ca(2+). At Asn149 the chain carries (3R)-3-hydroxyasparagine. Asn174 carries an N-linked (GlcNAc...) asparagine glycan. Cys175 and Cys202 are disulfide-bonded. In terms of domain architecture, CUB 2 spans 175–290 (CSGDVFTALI…KGWKLRYHGD (116 aa)). Ca(2+) is bound by residues Glu226, Asp236, Asp275, Gly278, and Gln279. A disulfide bridge connects residues Cys234 and Cys251. Sushi domains are found at residues 292–356 (ISCP…KCQP) and 357–423 (VYCG…RCIP). 7 disulfides stabilise this stretch: Cys294-Cys341, Cys321-Cys354, Cys359-Cys403, Cys386-Cys421, Cys425-Cys549, Cys595-Cys618, and Cys627-Cys659. One can recognise a Peptidase S1 domain in the interval 438–680 (IFGGQPAKIE…YVDWILKTMQ (243 aa)). Active-site charge relay system residues include His475 and Asp529. The Charge relay system role is filled by Ser631.

This sequence belongs to the peptidase S1 family. In terms of assembly, core component of the complement C1 complex, a calcium-dependent complex composed of 1 molecule of the C1Q subcomplex, 2 molecules of C1R and 2 molecules of C1S. The C1Q subcomplex is composed 18 subunits: 3 chains of C1QA, C1QB, and C1QC trimerize to form 6 collagen-like triple helices connected to six globular ligand-recognition modules. Cleaved and activated by C1R to generate Complement C1s subcomponent heavy and light chains. In terms of processing, the iron and 2-oxoglutarate dependent 3-hydroxylation of aspartate and asparagine is (R) stereospecific within EGF domains. Specifically expressed in male reproductive tissues.

It localises to the secreted. The protein localises to the cell surface. The catalysed reaction is Cleavage of Arg-|-Ala bond in complement component C4 to form C4a and C4b, and Lys(or Arg)-|-Lys bond in complement component C2 to form C2a and C2b: the 'classical' pathway C3 convertase.. Cleaved and activated by C1R. Immunoglobulin-binding promotes autoactivation of C1R, which results in the cleavage of the Arg-Ile bond in the catalytic domain. Inhibited by C1 inhibitor (SERPING1). Component of the complement C1 complex, a multiprotein complex that initiates the classical pathway of the complement system, a cascade of proteins that leads to phagocytosis and breakdown of pathogens and signaling that strengthens the adaptive immune system. C1S is activated following association of the C1 complex with immunoglobulins (IgG or IgM) complexed with antigens to form antigen-antibody complexes on the surface of pathogens. C1S is cleaved and activated by C1R to generate C1s subcomponent heavy and light chains. C1s subcomponent light chain then cleaves and activates C2 and C4, the next components of the classical complement pathway. In terms of biological role, serine protease component of the complement C1 complex, which catalyzes cleavage and activation of C2 and C4, the next components of the classical complement pathway. Also cleaves IGFBP5 and thereby inhibits the trophic effects of IGF1. This Mus musculus (Mouse) protein is Complement C1s-1 subcomponent.